The sequence spans 69 residues: Putative membrane protein insertion efficiency factor (69 aa).

It belongs to the UPF0161 family.

It is found in the cell inner membrane. Could be involved in insertion of integral membrane proteins into the membrane. The protein is Putative membrane protein insertion efficiency factor of Novosphingobium aromaticivorans (strain ATCC 700278 / DSM 12444 / CCUG 56034 / CIP 105152 / NBRC 16084 / F199).